Consider the following 509-residue polypeptide: Poly(A) RNA polymerase GLD2-B (509 aa).

The interval 88 to 125 is disordered; the sequence is PGSPPSSFQNRKRRSDEGNSPYDVKRQRFQSPQEQTVN. The segment covering 116 to 125 has biased composition (polar residues); sequence FQSPQEQTVN. Residues D240 and D242 each contribute to the Mg(2+) site. Residues 409–462 enclose the PAP-associated domain; the sequence is LGDLLLGFLKYFAVEFDWSKDIISLREAKALPRTDDYEWRNKYICVEEPFDGSN.

The protein belongs to the DNA polymerase type-B-like family. GLD2 subfamily. As to quaternary structure, component of a complex at least composed of cpeb1, cpsf1, tent2/gld2, pabpc1/ePAB, parn and sympk. Following oocyte maturation, parn is expelled from the complex. Interacts with rbfox2. Interacts with sympk. It depends on Mg(2+) as a cofactor. Mn(2+) serves as cofactor.

Its subcellular location is the cytoplasm. The catalysed reaction is RNA(n) + ATP = RNA(n)-3'-adenine ribonucleotide + diphosphate. Functionally, cytoplasmic poly(A) RNA polymerase that adds successive AMP monomers to the 3'-end of specific RNAs, forming a poly(A) tail. In contrast to the canonical nuclear poly(A) RNA polymerase, it only adds poly(A) to selected cytoplasmic mRNAs during oocyte maturation. Plays a central role during oocyte maturation by mediating polyadenylation of dormant mRNAs, which contain 5'AAUAAA-3' sequence in their 3'-UTR. In immature oocytes, polyadenylation of poly(A) tails is counteracted by the ribonuclease parn. During maturation parn is excluded from the ribonucleoprotein complex, allowing poly(A) elongation and activation of mRNAs. May not play a role in replication-dependent histone mRNA degradation. This chain is Poly(A) RNA polymerase GLD2-B, found in Xenopus laevis (African clawed frog).